The sequence spans 470 residues: Uronate isomerase (470 aa).

It belongs to the metallo-dependent hydrolases superfamily. Uronate isomerase family.

It carries out the reaction D-glucuronate = D-fructuronate. The catalysed reaction is aldehydo-D-galacturonate = keto-D-tagaturonate. Its pathway is carbohydrate metabolism; pentose and glucuronate interconversion. The protein is Uronate isomerase of Shigella boydii serotype 18 (strain CDC 3083-94 / BS512).